We begin with the raw amino-acid sequence, 409 residues long: Casein kinase II subunit alpha-1 (409 aa).

The first 35 residues, 1–35 (MIDTLFFLFFLFFDSPLRRLLLLCAVLALRAPTAH), serve as a signal peptide directing secretion. N-linked (GlcNAc...) asparagine glycosylation occurs at Asn-72. Residues 110 to 395 (YEVVRKVGRG…AKEAMAHAYF (286 aa)) enclose the Protein kinase domain. ATP contacts are provided by residues 116–124 (VGRGKYSEV) and Lys-139. N-linked (GlcNAc...) asparagine glycosylation occurs at Asn-188. Asp-227 serves as the catalytic Proton acceptor.

It belongs to the protein kinase superfamily. Ser/Thr protein kinase family. CK2 subfamily. As to quaternary structure, heterotetramer of two catalytic alpha subunits and two regulatory beta subunits. Seems to be present in all plant organs. But seems to be less expressed than CKA2.

The protein localises to the nucleus. The protein resides in the nucleolus. The catalysed reaction is L-seryl-[protein] + ATP = O-phospho-L-seryl-[protein] + ADP + H(+). The enzyme catalyses L-threonyl-[protein] + ATP = O-phospho-L-threonyl-[protein] + ADP + H(+). Its activity is regulated as follows. Inhibited by heparin. Its function is as follows. Casein kinases are operationally defined by their preferential utilization of acidic proteins such as caseins as substrates. Phosphorylates casein in vitro. The alpha chain contains the catalytic site. The tetrameric holoenzyme CK2, composed of two alpha and two beta subunits, phosphorylates the transcription factor GBFl, resulting in stimulation of its DNA binding activity. CK2 phosphorylates the transcription factor PIF1 after an exposure to light, resulting in a proteasome-dependent degradation of PIF1 and promotion of photomorphogenesis. CK2 phosphorylates translation initiation factors. May participate in the regulation of the initiation of translation. Acts as a circadian clock component that maintains the correct period length through phosphorylation of CCA1. Required for the maintenance and control of genomic stability and chromatin structure. May act as an ectokinase that phosphorylates several extracellular proteins. The sequence is that of Casein kinase II subunit alpha-1 from Arabidopsis thaliana (Mouse-ear cress).